The following is a 360-amino-acid chain: Phosphoserine aminotransferase (360 aa).

Arginine 42 is a binding site for L-glutamate. Residues 76 to 77, tryptophan 102, threonine 152, aspartate 171, and glutamine 194 contribute to the pyridoxal 5'-phosphate site; that span reads AS. N6-(pyridoxal phosphate)lysine is present on lysine 195. 236–237 is a binding site for pyridoxal 5'-phosphate; the sequence is NT.

It belongs to the class-V pyridoxal-phosphate-dependent aminotransferase family. SerC subfamily. Homodimer. Pyridoxal 5'-phosphate serves as cofactor.

Its subcellular location is the cytoplasm. It catalyses the reaction O-phospho-L-serine + 2-oxoglutarate = 3-phosphooxypyruvate + L-glutamate. The catalysed reaction is 4-(phosphooxy)-L-threonine + 2-oxoglutarate = (R)-3-hydroxy-2-oxo-4-phosphooxybutanoate + L-glutamate. It functions in the pathway amino-acid biosynthesis; L-serine biosynthesis; L-serine from 3-phospho-D-glycerate: step 2/3. Catalyzes the reversible conversion of 3-phosphohydroxypyruvate to phosphoserine and of 3-hydroxy-2-oxo-4-phosphonooxybutanoate to phosphohydroxythreonine. The polypeptide is Phosphoserine aminotransferase (Geobacillus kaustophilus (strain HTA426)).